The primary structure comprises 404 residues: Homocysteine-responsive endoplasmic reticulum-resident ubiquitin-like domain member 2 protein (404 aa).

A Ubiquitin-like domain is found at 10–89 (VTLIIKAPNQ…HMVHLVCASR (80 aa)). The disordered stretch occupies residues 86–153 (CASRSPPSSP…TLSQAQTDPA (68 aa)). Low complexity-rich tracts occupy residues 88 to 97 (SRSPPSSPKS) and 109 to 126 (SSTS…PSPS). Positions 127 to 153 (QESLSLVTGSSEGLRQRTLSQAQTDPA) are enriched in polar residues. Residues 301-321 (FIMVMGAMLLVYLHQAGWFPF) form a helical membrane-spanning segment.

It localises to the membrane. Could be involved in the unfolded protein response (UPR) pathway. This Mus musculus (Mouse) protein is Homocysteine-responsive endoplasmic reticulum-resident ubiquitin-like domain member 2 protein (Herpud2).